A 215-amino-acid polypeptide reads, in one-letter code: Glutathione S-transferase D6 (215 aa).

One can recognise a GST N-terminal domain in the interval 1–80 (MDLYNMSGSP…YLVEQYGKDD (80 aa)). Residues Ser9, 50–52 (HTI), and 64–66 (ETR) contribute to the glutathione site. The region spanning 86 to 206 (DPQKQALINQ…LARIQSAKKF (121 aa)) is the GST C-terminal domain.

It belongs to the GST superfamily. Delta family. Homodimer.

It carries out the reaction RX + glutathione = an S-substituted glutathione + a halide anion + H(+). Its function is as follows. Conjugation of reduced glutathione to a wide number of exogenous and endogenous hydrophobic electrophiles. May be involved in detoxification. This Drosophila melanogaster (Fruit fly) protein is Glutathione S-transferase D6.